The sequence spans 45 residues: Metallothionein-like protein 1C (45 aa).

This sequence belongs to the metallothionein superfamily. Type 15 family. In terms of tissue distribution, widely expressed at low levels.

Its function is as follows. Metallothioneins have a high content of cysteine residues that bind various heavy metals. Confers tolerance to cadmium (Cd) and plays a role in Cd and zinc (Zn) homeostasis. The chain is Metallothionein-like protein 1C (MT1C) from Arabidopsis thaliana (Mouse-ear cress).